The primary structure comprises 86 residues: Acyl-CoA-binding protein homolog 1 (86 aa).

Residues 1 to 86 enclose the ACB domain; sequence MTLSFDDAAA…VEELIAKYGA (86 aa). Residues K13, 28-32, K50, K54, and Y73 contribute to the an acyl-CoA site; that span reads YALFK.

It belongs to the ACBP family.

Binds medium- and long-chain acyl-CoA esters with very high affinity and may function as an intracellular carrier of acyl-CoA esters. This chain is Acyl-CoA-binding protein homolog 1 (acbp-1), found in Caenorhabditis elegans.